Reading from the N-terminus, the 283-residue chain is uncharacterized protein (283 aa).

Positions 172–270 constitute an HTH araC/xylS-type domain; it reads EAIRDYIDER…ERSPSEYRRQ (99 aa). 2 DNA-binding regions (H-T-H motif) span residues 189–210 and 237–260; these read ESVA…QKTG and VKEV…RKNT.

This is an uncharacterized protein from Escherichia coli (strain K12).